A 95-amino-acid polypeptide reads, in one-letter code: Selenoprotein K (95 aa).

Residues L20 to L42 form a helical membrane-spanning segment. Residues K47–R95 are disordered. Residue U93 is a non-standard amino acid, selenocysteine.

This sequence belongs to the selenoprotein K family. Interacts with DERL1, DERL2, DERL3 and SELENOS. The SELENOK-SELENOS complex interacts with VCP. Interacts with ZDHHC6. Post-translationally, cleaved by CAPN2/m-calpain in resting macrophages but not in activated macrophages. Macrophage activation up-regulates expression of the calpain inhibitor CAST/calpastatin, resulting in inhibition of CAPN2 activity. In terms of processing, truncated SELENOK proteins produced by failed UGA/Sec decoding are ubiquitinated by the CRL2(KLHDC2) complex, which recognizes the diglycine (Gly-Gly) at the C-terminus of truncated SELENOK proteins.

The protein resides in the endoplasmic reticulum membrane. It localises to the cell membrane. In terms of biological role, required for Ca(2+) flux in immune cells and plays a role in T-cell proliferation and in T-cell and neutrophil migration. Involved in endoplasmic reticulum-associated degradation (ERAD) of soluble glycosylated proteins. Required for palmitoylation and cell surface expression of CD36 and involved in macrophage uptake of low-density lipoprotein and in foam cell formation. Together with ZDHHC6, required for palmitoylation of ITPR1 in immune cells, leading to regulate ITPR1 stability and function. Plays a role in protection of cells from ER stress-induced apoptosis. Protects cells from oxidative stress when overexpressed in cardiomyocytes. The polypeptide is Selenoprotein K (Bos taurus (Bovine)).